Reading from the N-terminus, the 218-residue chain is Monomethylamine corrinoid protein 1 (218 aa).

Residues 1–91 (MANQEIFDKL…ELEKTKVEGE (91 aa)) enclose the B12-binding N-terminal domain. The region spanning 94–218 (TGLAITFVAE…AAKVALNIMK (125 aa)) is the B12-binding domain. H107 lines the methylcob(III)alamin pocket.

Belongs to the methylamine corrinoid protein family. Can form a complex with MtmB.

The protein operates within one-carbon metabolism; methanogenesis from methylamine. Its function is as follows. Acts as a methyl group carrier between MtmB and MtbA. In Methanosarcina mazei (strain ATCC BAA-159 / DSM 3647 / Goe1 / Go1 / JCM 11833 / OCM 88) (Methanosarcina frisia), this protein is Monomethylamine corrinoid protein 1 (mtmC1).